The following is a 115-amino-acid chain: MSNNYEMMYILRPDLSEEQVQEVSSKYKTMLQDSGASDLQVQVRGKRHLAYPIQNFNDGIYIQVNYKADGSQIKAVERDMRLGEMVIRYLTMKLDAEPIALEADAPPSEPAAPGA.

This sequence belongs to the bacterial ribosomal protein bS6 family.

In terms of biological role, binds together with bS18 to 16S ribosomal RNA. This chain is Small ribosomal subunit protein bS6, found in Picosynechococcus sp. (strain ATCC 27264 / PCC 7002 / PR-6) (Agmenellum quadruplicatum).